A 509-amino-acid polypeptide reads, in one-letter code: MQNFKELGISDKTVQTLEAMGFKEPTPIQKDSIPYALEGDDILGQAQTGTGKTGAFGIPLIEKVVGQQGVQSLILAPTRELAMQVAEQLREFSKGQKVQVVTVFGGMPIERQIKVLKRGPQIVVGTPGRVIDHLNRRTLKTQGIHTLILDEADEMMNMGFIDDMRFIMDKIPAEQRQTMLFSATMPKAIQELVQQFMKAPKIIKTMNNEMSDPQIDEYYTIVKELEKFDTFTNFLDVHQPELAIVFGRTKRRVDELTSALLSKGYKAEGLHGDITQAKRLEVLKKFKNDQIDILVATDVAARGLDISGVSHVYNFDIPQDTESYTHRIGRTGRAGKEGIAVTFVNPIEMDYIRQIEDVNNRRMKALRPPHRKEVLKAREDDIKDRVQNWMSRENEPRLQRISSELLKEYDSTELVASLLQELVEANDEVEVQLTFEKPLARKNRSSKGGSRRSNHKRGNGKFDNKNRRSKGSKGQSSKKKNQKKFDRRDKQQKSGNQSLKGRTFADHQK.

The short motif at 2–30 (QNFKELGISDKTVQTLEAMGFKEPTPIQK) is the Q motif element. In terms of domain architecture, Helicase ATP-binding spans 33–203 (IPYALEGDDI…QQFMKAPKII (171 aa)). 46–53 (AQTGTGKT) is an ATP binding site. The DEAD box signature appears at 150-153 (DEAD). The Helicase C-terminal domain occupies 214–375 (QIDEYYTIVK…LRPPHRKEVL (162 aa)). Composition is skewed to basic residues over residues 440–459 (ARKNRSSKGGSRRSNHKRGN) and 467–482 (RRSKGSKGQSSKKKNQ). A disordered region spans residues 440–509 (ARKNRSSKGG…KGRTFADHQK (70 aa)). The span at 483–492 (KKFDRRDKQQ) shows a compositional bias: basic and acidic residues.

It belongs to the DEAD box helicase family. CshA subfamily. In terms of assembly, oligomerizes, may be a member of the RNA degradosome.

Its subcellular location is the cytoplasm. The catalysed reaction is ATP + H2O = ADP + phosphate + H(+). In terms of biological role, DEAD-box RNA helicase possibly involved in RNA degradation. Unwinds dsRNA in both 5'- and 3'-directions, has RNA-dependent ATPase activity. The chain is DEAD-box ATP-dependent RNA helicase CshA from Staphylococcus epidermidis (strain ATCC 12228 / FDA PCI 1200).